A 503-amino-acid polypeptide reads, in one-letter code: Cytochrome P450 monooxygenase lnbC (503 aa).

A helical transmembrane segment spans residues 14–34 (VVLLLSSVWIAVHLVLAAYNV). 2 N-linked (GlcNAc...) asparagine glycosylation sites follow: asparagine 94 and asparagine 169. Residue cysteine 446 participates in heme binding.

Belongs to the cytochrome P450 family. It depends on heme as a cofactor.

The protein localises to the membrane. It functions in the pathway secondary metabolite biosynthesis. Its function is as follows. Cytochrome P450 monooxygenase; part of the lnb gene cluster that mediates the biosynthesis of diastereomeric piperazines. Lna and lnb clusters encode sets of enzymes that produce overlapping sets of previously undescribed metabolites such as piperazinomycin-like metabolites or morpholine. The lna and lnb biosynthetic pathways appear to be part of a signaling network that controls the formation of sclerotia, a resilient overwintering structure. One primary function of the non-canonical nonribosomal peptide synthetases lnaA and lnbA consists in the reduction of L-tyrosine. The presence in the clusters of tailoring enzymes such as the oxidoreductases lnaB, lnbB, lnaE or lnbE, as well as of the cytochrome P450 monooxygenases lnaC, lnaD, or lnbC, might explain formation of various diastereomeric piperazines. This is Cytochrome P450 monooxygenase lnbC from Aspergillus flavus (strain ATCC 200026 / FGSC A1120 / IAM 13836 / NRRL 3357 / JCM 12722 / SRRC 167).